We begin with the raw amino-acid sequence, 217 residues long: Small ribosomal subunit protein uS3 (217 aa).

In terms of domain architecture, KH type-2 spans 38 to 106; the sequence is IRKYIDNALQ…KVHINVIEIK (69 aa).

This sequence belongs to the universal ribosomal protein uS3 family. Part of the 30S ribosomal subunit. Forms a tight complex with proteins S10 and S14.

In terms of biological role, binds the lower part of the 30S subunit head. Binds mRNA in the 70S ribosome, positioning it for translation. The chain is Small ribosomal subunit protein uS3 from Staphylococcus saprophyticus subsp. saprophyticus (strain ATCC 15305 / DSM 20229 / NCIMB 8711 / NCTC 7292 / S-41).